The chain runs to 264 residues: Phosphonates import ATP-binding protein PhnC (264 aa).

The ABC transporter domain occupies 3–246 (IRLQEAGLRH…MLDALYANEQ (244 aa)). 35 to 42 (GPSGAGKS) contributes to the ATP binding site.

Belongs to the ABC transporter superfamily. Phosphonates importer (TC 3.A.1.9.1) family. The complex is composed of two ATP-binding proteins (PhnC), two transmembrane proteins (PhnE) and a solute-binding protein (PhnD).

Its subcellular location is the cell inner membrane. It catalyses the reaction phosphonate(out) + ATP + H2O = phosphonate(in) + ADP + phosphate + H(+). Its function is as follows. Part of the ABC transporter complex PhnCDE involved in phosphonates import. Responsible for energy coupling to the transport system. The protein is Phosphonates import ATP-binding protein PhnC of Pseudomonas entomophila (strain L48).